The sequence spans 103 residues: UPF0058 protein MJ1205 (103 aa).

This sequence belongs to the UPF0058 family.

The polypeptide is UPF0058 protein MJ1205 (Methanocaldococcus jannaschii (strain ATCC 43067 / DSM 2661 / JAL-1 / JCM 10045 / NBRC 100440) (Methanococcus jannaschii)).